A 450-amino-acid polypeptide reads, in one-letter code: tRNA modification GTPase MnmE (450 aa).

The (6S)-5-formyl-5,6,7,8-tetrahydrofolate site is built by Arg20, Glu78, and Lys117. Residues 211–372 enclose the TrmE-type G domain; the sequence is GLRMVIVGKP…LEESIYRETQ (162 aa). Position 221 (Asn221) interacts with K(+). GTP is bound by residues 221 to 226, 240 to 246, 265 to 268, 326 to 329, and 353 to 355; these read NVGKST, TDIPGTT, DTAG, NKVD, and SAL. Ser225 is a Mg(2+) binding site. Positions 240, 242, and 245 each coordinate K(+). Thr246 contributes to the Mg(2+) binding site. Position 450 (Lys450) interacts with (6S)-5-formyl-5,6,7,8-tetrahydrofolate.

Belongs to the TRAFAC class TrmE-Era-EngA-EngB-Septin-like GTPase superfamily. TrmE GTPase family. As to quaternary structure, homodimer. Heterotetramer of two MnmE and two MnmG subunits. Requires K(+) as cofactor.

It localises to the cytoplasm. Its function is as follows. Exhibits a very high intrinsic GTPase hydrolysis rate. Involved in the addition of a carboxymethylaminomethyl (cmnm) group at the wobble position (U34) of certain tRNAs, forming tRNA-cmnm(5)s(2)U34. In Thermotoga maritima (strain ATCC 43589 / DSM 3109 / JCM 10099 / NBRC 100826 / MSB8), this protein is tRNA modification GTPase MnmE.